A 95-amino-acid polypeptide reads, in one-letter code: Co-chaperonin GroES (95 aa).

Belongs to the GroES chaperonin family. As to quaternary structure, heptamer of 7 subunits arranged in a ring. Interacts with the chaperonin GroEL.

It is found in the cytoplasm. Functionally, together with the chaperonin GroEL, plays an essential role in assisting protein folding. The GroEL-GroES system forms a nano-cage that allows encapsulation of the non-native substrate proteins and provides a physical environment optimized to promote and accelerate protein folding. GroES binds to the apical surface of the GroEL ring, thereby capping the opening of the GroEL channel. The chain is Co-chaperonin GroES from Ruegeria pomeroyi (strain ATCC 700808 / DSM 15171 / DSS-3) (Silicibacter pomeroyi).